The sequence spans 87 residues: Small ribosomal subunit protein uS15c (87 aa).

This sequence belongs to the universal ribosomal protein uS15 family. Part of the 30S ribosomal subunit.

It localises to the plastid. The protein localises to the chloroplast. The polypeptide is Small ribosomal subunit protein uS15c (rps15) (Oenothera biennis (German evening primrose)).